Here is a 147-residue protein sequence, read N- to C-terminus: Protein archease (147 aa).

Ca(2+) contacts are provided by Asp-17, Asp-146, and Ile-147.

Belongs to the archease family.

Functionally, activates the tRNA-splicing ligase complex by facilitating the enzymatic turnover of catalytic subunit RtcB. Acts by promoting the guanylylation of RtcB, a key intermediate step in tRNA ligation. Can also alter the NTP specificity of RtcB such that ATP, dGTP or ITP is used efficiently. The protein is Protein archease of Pyrobaculum calidifontis (strain DSM 21063 / JCM 11548 / VA1).